The primary structure comprises 760 residues: 5-methyltetrahydropteroyltriglutamate--homocysteine methyltransferase (760 aa).

5-methyltetrahydropteroyltri-L-glutamate contacts are provided by residues 15–18 (RELK) and lysine 114. L-homocysteine is bound by residues 436–438 (IGS) and glutamate 489. Residues 436–438 (IGS) and glutamate 489 contribute to the L-methionine site. Residues 520–521 (RC) and tryptophan 566 each bind 5-methyltetrahydropteroyltri-L-glutamate. L-homocysteine is bound at residue aspartate 604. Aspartate 604 lines the L-methionine pocket. Glutamate 610 contacts 5-methyltetrahydropteroyltri-L-glutamate. Positions 646, 648, and 670 each coordinate Zn(2+). Histidine 699 acts as the Proton donor in catalysis. Residue cysteine 731 coordinates Zn(2+).

It belongs to the vitamin-B12 independent methionine synthase family. The cofactor is Zn(2+).

It catalyses the reaction 5-methyltetrahydropteroyltri-L-glutamate + L-homocysteine = tetrahydropteroyltri-L-glutamate + L-methionine. Its pathway is amino-acid biosynthesis; L-methionine biosynthesis via de novo pathway; L-methionine from L-homocysteine (MetE route): step 1/1. Catalyzes the transfer of a methyl group from 5-methyltetrahydrofolate to homocysteine resulting in methionine formation. The protein is 5-methyltetrahydropteroyltriglutamate--homocysteine methyltransferase of Shewanella oneidensis (strain ATCC 700550 / JCM 31522 / CIP 106686 / LMG 19005 / NCIMB 14063 / MR-1).